The chain runs to 211 residues: Adenylate kinase (211 aa).

An ATP-binding site is contributed by 10–15 (GSGKGT). The tract at residues 30-59 (STGDLFRENILNSTALGQEIKKIVERGELV) is NMP. AMP is bound by residues Thr31, Arg36, 57-59 (ELV), 85-88 (GFPR), and Gln92. Residues 121 to 158 (GRRICKSCNNIFNIYTLTTKKNGICDVCGGDLYQREDD) form an LID region. ATP is bound at residue Arg122. Residues Cys125 and Cys128 each contribute to the Zn(2+) site. 131–132 (IF) lines the ATP pocket. Zn(2+) contacts are provided by Cys145 and Cys148. The AMP site is built by Arg155 and Arg166. Position 194 (Val194) interacts with ATP.

The protein belongs to the adenylate kinase family. As to quaternary structure, monomer.

It is found in the cytoplasm. The enzyme catalyses AMP + ATP = 2 ADP. It functions in the pathway purine metabolism; AMP biosynthesis via salvage pathway; AMP from ADP: step 1/1. Its function is as follows. Catalyzes the reversible transfer of the terminal phosphate group between ATP and AMP. Plays an important role in cellular energy homeostasis and in adenine nucleotide metabolism. The chain is Adenylate kinase from Borreliella burgdorferi (strain ATCC 35210 / DSM 4680 / CIP 102532 / B31) (Borrelia burgdorferi).